A 338-amino-acid chain; its full sequence is D-erythrose-4-phosphate dehydrogenase (338 aa).

11-12 is a binding site for NAD(+); it reads RI. Substrate contacts are provided by residues 153–155, Arg-199, 212–213, and Arg-235; these read SCT and TK. Cys-154 (nucleophile) is an active-site residue. Asn-317 provides a ligand contact to NAD(+).

Belongs to the glyceraldehyde-3-phosphate dehydrogenase family. Epd subfamily. Homotetramer.

The protein localises to the cytoplasm. The catalysed reaction is D-erythrose 4-phosphate + NAD(+) + H2O = 4-phospho-D-erythronate + NADH + 2 H(+). It functions in the pathway cofactor biosynthesis; pyridoxine 5'-phosphate biosynthesis; pyridoxine 5'-phosphate from D-erythrose 4-phosphate: step 1/5. Functionally, catalyzes the NAD-dependent conversion of D-erythrose 4-phosphate to 4-phosphoerythronate. This chain is D-erythrose-4-phosphate dehydrogenase, found in Shewanella baltica (strain OS223).